Consider the following 441-residue polypeptide: NADH-quinone oxidoreductase subunit D (441 aa).

The protein belongs to the complex I 49 kDa subunit family. In terms of assembly, NDH-1 is composed of 14 different subunits. Subunits NuoB, C, D, E, F, and G constitute the peripheral sector of the complex.

It is found in the cell membrane. It carries out the reaction a quinone + NADH + 5 H(+)(in) = a quinol + NAD(+) + 4 H(+)(out). Functionally, NDH-1 shuttles electrons from NADH, via FMN and iron-sulfur (Fe-S) centers, to quinones in the respiratory chain. The immediate electron acceptor for the enzyme in this species is believed to be a menaquinone. Couples the redox reaction to proton translocation (for every two electrons transferred, four hydrogen ions are translocated across the cytoplasmic membrane), and thus conserves the redox energy in a proton gradient. The protein is NADH-quinone oxidoreductase subunit D of Mycobacterium avium (strain 104).